Here is a 101-residue protein sequence, read N- to C-terminus: Large ribosomal subunit protein bL21 (101 aa).

Belongs to the bacterial ribosomal protein bL21 family. As to quaternary structure, part of the 50S ribosomal subunit. Contacts protein L20.

In terms of biological role, this protein binds to 23S rRNA in the presence of protein L20. The polypeptide is Large ribosomal subunit protein bL21 (Metamycoplasma arthritidis (strain 158L3-1) (Mycoplasma arthritidis)).